Here is a 640-residue protein sequence, read N- to C-terminus: 1-deoxy-D-xylulose-5-phosphate synthase (640 aa).

Thiamine diphosphate contacts are provided by residues histidine 79 and 120 to 122 (AHS). A Mg(2+)-binding site is contributed by aspartate 151. Thiamine diphosphate is bound by residues 152 to 153 (GA), asparagine 180, tyrosine 289, and glutamate 371. Asparagine 180 serves as a coordination point for Mg(2+).

This sequence belongs to the transketolase family. DXPS subfamily. As to quaternary structure, homodimer. Mg(2+) is required as a cofactor. Thiamine diphosphate serves as cofactor.

It catalyses the reaction D-glyceraldehyde 3-phosphate + pyruvate + H(+) = 1-deoxy-D-xylulose 5-phosphate + CO2. It functions in the pathway metabolic intermediate biosynthesis; 1-deoxy-D-xylulose 5-phosphate biosynthesis; 1-deoxy-D-xylulose 5-phosphate from D-glyceraldehyde 3-phosphate and pyruvate: step 1/1. Its function is as follows. Catalyzes the acyloin condensation reaction between C atoms 2 and 3 of pyruvate and glyceraldehyde 3-phosphate to yield 1-deoxy-D-xylulose-5-phosphate (DXP). The polypeptide is 1-deoxy-D-xylulose-5-phosphate synthase (Erythrobacter litoralis (strain HTCC2594)).